We begin with the raw amino-acid sequence, 179 residues long: Large ribosomal subunit protein uL5 (179 aa).

The protein belongs to the universal ribosomal protein uL5 family. In terms of assembly, part of the 50S ribosomal subunit; part of the 5S rRNA/L5/L18/L25 subcomplex. Contacts the 5S rRNA and the P site tRNA. Forms a bridge to the 30S subunit in the 70S ribosome.

Its function is as follows. This is one of the proteins that bind and probably mediate the attachment of the 5S RNA into the large ribosomal subunit, where it forms part of the central protuberance. In the 70S ribosome it contacts protein S13 of the 30S subunit (bridge B1b), connecting the 2 subunits; this bridge is implicated in subunit movement. Contacts the P site tRNA; the 5S rRNA and some of its associated proteins might help stabilize positioning of ribosome-bound tRNAs. The sequence is that of Large ribosomal subunit protein uL5 from Pectobacterium atrosepticum (strain SCRI 1043 / ATCC BAA-672) (Erwinia carotovora subsp. atroseptica).